We begin with the raw amino-acid sequence, 180 residues long: Large ribosomal subunit protein uL5 (180 aa).

The protein belongs to the universal ribosomal protein uL5 family. In terms of assembly, part of the 50S ribosomal subunit; part of the 5S rRNA/L5/L18/L25 subcomplex. Contacts the 5S rRNA and the P site tRNA. Forms a bridge to the 30S subunit in the 70S ribosome.

Its function is as follows. This is one of the proteins that bind and probably mediate the attachment of the 5S RNA into the large ribosomal subunit, where it forms part of the central protuberance. In the 70S ribosome it contacts protein S13 of the 30S subunit (bridge B1b), connecting the 2 subunits; this bridge is implicated in subunit movement. Contacts the P site tRNA; the 5S rRNA and some of its associated proteins might help stabilize positioning of ribosome-bound tRNAs. This is Large ribosomal subunit protein uL5 from Lactobacillus delbrueckii subsp. bulgaricus (strain ATCC 11842 / DSM 20081 / BCRC 10696 / JCM 1002 / NBRC 13953 / NCIMB 11778 / NCTC 12712 / WDCM 00102 / Lb 14).